A 262-amino-acid polypeptide reads, in one-letter code: Type III pantothenate kinase (262 aa).

Residue 7 to 14 coordinates ATP; the sequence is DIGNTRLK. Residues tyrosine 96 and 103–106 each bind substrate; that span reads GSDR. Aspartate 105 acts as the Proton acceptor in catalysis. Residue threonine 137 coordinates ATP. Threonine 187 is a substrate binding site.

It belongs to the type III pantothenate kinase family. As to quaternary structure, homodimer. It depends on NH4(+) as a cofactor. K(+) is required as a cofactor.

The protein localises to the cytoplasm. The enzyme catalyses (R)-pantothenate + ATP = (R)-4'-phosphopantothenate + ADP + H(+). It participates in cofactor biosynthesis; coenzyme A biosynthesis; CoA from (R)-pantothenate: step 1/5. Catalyzes the phosphorylation of pantothenate (Pan), the first step in CoA biosynthesis. The protein is Type III pantothenate kinase of Leptothrix cholodnii (strain ATCC 51168 / LMG 8142 / SP-6) (Leptothrix discophora (strain SP-6)).